Consider the following 545-residue polypeptide: Autoimmune regulator (545 aa).

One can recognise an HSR domain in the interval 1-105 (MATDAALRRL…ILDSFPKDVD (105 aa)). 2 consecutive short sequence motifs (LXXLL motif) follow at residues 7–11 (LRRLL) and 63–67 (LSWLL). Disordered stretches follow at residues 101–178 (PKDV…LPLG) and 234–290 (SKFE…SDPQ). Positions 116–128 (PAVPKALVPPPRL) are enriched in pro residues. The span at 140-152 (AAAPAALTPRGTA) shows a compositional bias: low complexity. Residues 181 to 280 (IQTMSASVQR…ARLGQQGSVP (100 aa)) form the SAND domain. 3 interaction with histone H3 not methylated at 'Lys-4' regions span residues 295-298 (NEDE), 304-312 (DGGELICCD), and 331-335 (PSGTW). The PHD-type 1 zinc-finger motif lies at 296–343 (EDECAVCRDGGELICCDGCPRAFHLACLSPPLREIPSGTWRCSSCLQA). Positions 348–382 (VQPRAEEPRPQEPPVETPLPPGLRSAGEEVRGPPG) are disordered. Residues 358–368 (QEPPVETPLPP) are compositionally biased toward pro residues. Positions 414–418 (LHPLL) match the LXXLL motif 3 motif. The segment at 434–475 (CGVCGDGTDVLRCTHCAAAFHWRCHFPAGTSRPGTGLRCRSC) adopts a PHD-type 2 zinc-finger fold. A disordered region spans residues 489–508 (APSPARLAPGPAKDDTASHE). The LXXLL motif 4 signature appears at 516 to 520 (LESLL).

Homodimer and homotetramer. Interacts with CREBBP. Interacts preferentially with histone H3 that is not methylated at 'Lys-4'. Binds with lower affinity to histone H3 that is monomethylated at 'Lys-4'. Trimethylation of histone H3 at 'Lys-4' or phosphorylation at 'Thr-3' abolish the interaction. Binds with lower affinity to histone H3 that is acetylated at 'Lys-4', or that is acetylated at 'Lys-9' or trimethylated at 'Lys-9'. Binds histone H3 that is dimethylated at 'Arg-2' with very low affinity. In terms of processing, phosphorylated. Phosphorylation could trigger oligomerization. Widely expressed. Expressed at higher level in thymus (medullary epithelial cells and monocyte-dendritic cells), pancreas, adrenal cortex and testis. Expressed at lower level in the spleen, fetal liver and lymph nodes. In secondary lymphoid organs, expressed in a discrete population of bone marrow-derived toleregenic antigen presenting cells (APCs) called extrathymic AIRE expressing cells (eTAC)(at protein level). Isoform 2 and isoform 3 seem to be less frequently expressed than isoform 1, if at all.

It is found in the nucleus. The protein localises to the cytoplasm. In terms of biological role, transcription factor playing an essential role to promote self-tolerance in the thymus by regulating the expression of a wide array of self-antigens that have the commonality of being tissue-restricted in their expression pattern in the periphery, called tissue restricted antigens (TRA). Binds to G-doublets in an A/T-rich environment; the preferred motif is a tandem repeat of 5'-ATTGGTTA-3' combined with a 5'-TTATTA-3' box. Binds to nucleosomes. Binds to chromatin and interacts selectively with histone H3 that is not methylated at 'Lys-4', not phosphorylated at 'Thr-3' and not methylated at 'Arg-2'. Functions as a sensor of histone H3 modifications that are important for the epigenetic regulation of gene expression. Mainly expressed by medullary thymic epithelial cells (mTECs), induces the expression of thousands of tissue-restricted proteins, which are presented on major histocompatibility complex class I (MHC-I) and MHC-II molecules to developing T-cells percolating through the thymic medulla. Also induces self-tolerance through other mechanisms such as the regulation of the mTEC differentiation program. Controls the medullary accumulation of thymic dendritic cells and the development of regulatory T-cell through the regulation of XCL1 expression. Regulates the production of CCR4 and CCR7 ligands in medullary thymic epithelial cells and alters the coordinated maturation and migration of thymocytes. In thimic B-cells, allows the presentation of licensing-dependent endogenous self-anitgen for negative selection. In secondary lymphoid organs, induces functional inactivation of CD4(+) T-cells. Expressed by a distinct bone marrow-derived population, induces self-tolerance through a mechanism that does not require regulatory T-cells and is resitant to innate inflammatory stimuli. In Homo sapiens (Human), this protein is Autoimmune regulator (AIRE).